We begin with the raw amino-acid sequence, 386 residues long: Succinate--CoA ligase [ADP-forming] subunit beta (386 aa).

One can recognise an ATP-grasp domain in the interval 9–244; it reads KEILRKYGVP…HDEEDPLETR (236 aa). ATP contacts are provided by residues lysine 46, 53–55, glutamate 99, cysteine 102, and glutamate 107; that span reads GRG. 2 residues coordinate Mg(2+): asparagine 199 and aspartate 213. Substrate is bound by residues asparagine 264 and 321 to 323; that span reads GIM.

Belongs to the succinate/malate CoA ligase beta subunit family. Heterotetramer of two alpha and two beta subunits. Mg(2+) is required as a cofactor.

It carries out the reaction succinate + ATP + CoA = succinyl-CoA + ADP + phosphate. The enzyme catalyses GTP + succinate + CoA = succinyl-CoA + GDP + phosphate. The protein operates within carbohydrate metabolism; tricarboxylic acid cycle; succinate from succinyl-CoA (ligase route): step 1/1. Functionally, succinyl-CoA synthetase functions in the citric acid cycle (TCA), coupling the hydrolysis of succinyl-CoA to the synthesis of either ATP or GTP and thus represents the only step of substrate-level phosphorylation in the TCA. The beta subunit provides nucleotide specificity of the enzyme and binds the substrate succinate, while the binding sites for coenzyme A and phosphate are found in the alpha subunit. The chain is Succinate--CoA ligase [ADP-forming] subunit beta from Rickettsia akari (strain Hartford).